The following is a 406-amino-acid chain: Phosphoglycerate kinase (406 aa).

Substrate-binding positions include 23-25 (DIN), Arg-38, 61-64 (HQGR), Arg-117, and Arg-157. ATP is bound by residues Glu-331 and 357–360 (GGHI).

The protein belongs to the phosphoglycerate kinase family. As to quaternary structure, monomer.

It is found in the cytoplasm. The catalysed reaction is (2R)-3-phosphoglycerate + ATP = (2R)-3-phospho-glyceroyl phosphate + ADP. The protein operates within carbohydrate degradation; glycolysis; pyruvate from D-glyceraldehyde 3-phosphate: step 2/5. The protein is Phosphoglycerate kinase of Methanopyrus kandleri (strain AV19 / DSM 6324 / JCM 9639 / NBRC 100938).